A 234-amino-acid chain; its full sequence is Uridylate kinase (234 aa).

ATP is bound at residue 9-12; that stretch reads KLSG. G51 contacts UMP. ATP contacts are provided by G52 and R56. UMP contacts are provided by residues D71 and 132–139; that span reads CGNPFFTT. 3 residues coordinate ATP: T159, Y165, and D168.

This sequence belongs to the UMP kinase family. In terms of assembly, homohexamer.

It localises to the cytoplasm. It catalyses the reaction UMP + ATP = UDP + ADP. It participates in pyrimidine metabolism; CTP biosynthesis via de novo pathway; UDP from UMP (UMPK route): step 1/1. With respect to regulation, inhibited by UTP. In terms of biological role, catalyzes the reversible phosphorylation of UMP to UDP. The protein is Uridylate kinase of Prochlorococcus marinus (strain MIT 9312).